The primary structure comprises 103 residues: MYAVFQSGGKQHRVAEGQTVRLEKIEVAPGETVEFDKVLMVSNGDDVKIGTPIVAGGKVTAEVVTHGRGDKVKIVKFRRRKHSRKQAGHRQWFTEVKITGINA.

Belongs to the bacterial ribosomal protein bL21 family. As to quaternary structure, part of the 50S ribosomal subunit. Contacts protein L20.

This protein binds to 23S rRNA in the presence of protein L20. The sequence is that of Large ribosomal subunit protein bL21 from Alteromonas mediterranea (strain DSM 17117 / CIP 110805 / LMG 28347 / Deep ecotype).